We begin with the raw amino-acid sequence, 138 residues long: Phospholipase A2 homolog crotoxin acid subunit CA (138 aa).

The N-terminal stretch at 1–37 (MRALWIVAVLLVGVEGSLVEFETLMMKIAGRSGISYY) is a signal peptide. 8 cysteine pairs are disulfide-bonded: cysteine 42–cysteine 131, cysteine 44–cysteine 60, cysteine 59–cysteine 111, cysteine 65–cysteine 138, cysteine 66–cysteine 104, cysteine 73–cysteine 97, cysteine 91–cysteine 102, and cysteine 131–cysteine 138. The propeptide occupies 79–82 (VYTY). Glutamine 84 is subject to Pyrrolidone carboxylic acid. The propeptide occupies 119–124 (YDYKYL). Pyrrolidone carboxylic acid is present on glutamine 125.

It belongs to the phospholipase A2 family. Group II subfamily. D49 sub-subfamily. Heterodimer of one of the acidic (CA1, CA2, CA3 or CA4) and one of the basic (CBa1, CBa2, CBb, CBc or CBd) subunits; non-covalently linked. The acidic subunit is non-toxic, without enzymatic activity and comprises 3 peptides that are cross-linked by 5 disulfide bridges. The basic subunit is toxic, has phospholipase A2 activity and is composed of a single chain. Multiple variants of each subunit give different crotoxin complexes that can be subdivided into 2 classes: (1) those of high toxicity, low PLA2 activity (CBb, CBc and CBd linked with high affinity to any CA) and high stability (K(d)=4.5 nM) and (2) those of moderate toxicity, high PLA2 activity (CBa2 linked with low affinity to any CA) and low stability (K(d)=25 nM). In terms of tissue distribution, expressed by the venom gland.

Its subcellular location is the secreted. Its function is as follows. CAalpha-CAbeta-CAgamma: The acidic subunit of crotoxin (CA) is a heterotrimer of three disulfide-linked chains generated by post-translational maturation of a PLA2-like precursor. CA has no PLA2 activity and is not neurotoxic by itself, but plays several important functions in the crotoxin complex by increasing the lethal potency of the uncomplexed CB subunit. It acts by physically occluding the hydrophobic interfacial binding surface (IBS) of CB. This effect decreases the adsorption of CB to phospholipid membranes, targeting the crotoxin complex to reach the specific presynaptic receptor (R48) at the neuromuscular junction. It also prevents the formation of the reactive CB dimer. Moreover, the CA subunit inhibits the catalytic activity by partially masking the catalytic site of CB and inhibits its anticoagulant activity. Functionally, heterodimer CA-CB: Crotoxin is a potent presynaptic neurotoxin that possesses phospholipase A2 (PLA2) activity and exerts a lethal action by blocking neuromuscular transmission. It consists of a non-covalent association of a basic and weakly toxic PLA2 subunit (CBa2, CBb, CBc, or CBd), with a small acidic, non-enzymatic and non-toxic subunit (CA1, CA2, CA3 or CA4). The complex acts by binding to a specific 48-kDa protein (R48/CAPT) receptor located on presynaptic membranes, forming a transient ternary complex CA-CB-R48, followed by dissociation of the CA-CB complex and release of the CA subunit. At equilibrium, only the CB subunits remain associated with the specific crotoxin receptor. In addition to neurotoxicity, crotoxin has been found to exert myotoxicity, nephrotoxicity, and cardiovascular toxicity. Moreover, anti-inflammatory, immunomodulatory, anti-tumor and analgesic effects of crotoxin have also been reported. Found in the venom as a monomer and stabilized by one disulfide bond (Cys-131 and Cys-138). This peptide induces potent antinociceptive effects in acute and chronic pain models. This effect is mediated by the release of peripheral dynorphin A, an endogenous agonist of kappa-opioid receptors, and this release is dependent on cannabinoid receptor CB2 activation. This Crotalus durissus terrificus (South American rattlesnake) protein is Phospholipase A2 homolog crotoxin acid subunit CA.